The following is a 526-amino-acid chain: MLMLLVRGTHYENLRPKVVLPTPLVGRSTETFVSEFPGPDTGIRWRRSDEALRVNVGGVRRQLSARALARFPGTRLGRLQAAASEEQARRLCDDYDEAAREFYFDRHPGFFLGLLHFYRTGHLHVLDELCVFAFGQEADYWGLGENALAACCRARYLERRLTQPHAWDEDSDTPSSVDPCPDEISDVQRELARYGAARCGRLRRRLWLTMENPGYSLPSKLFSCVSISVVLASIAAMCIHSLPEYQAREAAAAVAAVAAGRSPEGVRDDPVLRRLEYFCIAWFSFEVSSRLLLAPSTRNFFCHPLNLIDIVSVLPFYLTLLAGVALGDQGGKEFGHLGKVVQVFRLMRIFRVLKLARHSTGLRSLGATLKHSYREVGILLLYLAVGVSVFSGVAYTAEKEEDVGFNTIPACWWWGTVSMTTVGYGDVVPVTVAGKLAASGCILGGILVVALPITIIFNKFSHFYRRQKALEAAVRNSNHREFEDLLSSVDGVSEASLETSRETSQEGRSADLESQAPSEPPHPQMY.

The Cytoplasmic portion of the chain corresponds to 1-217; sequence MLMLLVRGTH…LTMENPGYSL (217 aa). A helical membrane pass occupies residues 218–239; it reads PSKLFSCVSISVVLASIAAMCI. Residues 240-270 are Extracellular-facing; the sequence is HSLPEYQAREAAAAVAAVAAGRSPEGVRDDP. A helical membrane pass occupies residues 271 to 293; sequence VLRRLEYFCIAWFSFEVSSRLLL. Residues 294-304 lie on the Cytoplasmic side of the membrane; the sequence is APSTRNFFCHP. The helical transmembrane segment at 305-322 threads the bilayer; the sequence is LNLIDIVSVLPFYLTLLA. Residues 323 to 337 are Extracellular-facing; that stretch reads GVALGDQGGKEFGHL. Residues 338-358 traverse the membrane as a helical; Voltage-sensor segment; the sequence is GKVVQVFRLMRIFRVLKLARH. Residues 359–373 are Cytoplasmic-facing; the sequence is STGLRSLGATLKHSY. The chain crosses the membrane as a helical span at residues 374–395; sequence REVGILLLYLAVGVSVFSGVAY. Residues 396 to 408 are Extracellular-facing; it reads TAEKEEDVGFNTI. An intramembrane region (helical) is located at residues 409–420; it reads PACWWWGTVSMT. The Selectivity filter signature appears at 421–426; it reads TVGYGD. The stretch at 421-428 is an intramembrane region; it reads TVGYGDVV. Over 429–435 the chain is Extracellular; it reads PVTVAGK. A helical transmembrane segment spans residues 436-464; that stretch reads LAASGCILGGILVVALPITIIFNKFSHFY. Residues 465–526 lie on the Cytoplasmic side of the membrane; that stretch reads RRQKALEAAV…PSEPPHPQMY (62 aa). A disordered region spans residues 491–526; sequence GVSEASLETSRETSQEGRSADLESQAPSEPPHPQMY. A compositionally biased stretch (basic and acidic residues) spans 499–511; that stretch reads TSRETSQEGRSAD.

It belongs to the potassium channel family. S (TC 1.A.1.2) subfamily. Kv9.1/KCNS1 sub-subfamily. Heterotetramer with KCNB1. Heterotetramer with KCNB2. Does not form homomultimers.

Its subcellular location is the cell membrane. Functionally, potassium channel regulatory subunit that modulate the delayed rectifier voltage-gated potassium channel activity of KCNB1 and KCNB2 by altering their kinetics, expression levels, and shifting the half-inactivation potential to more polarized values. While it does not form functional channels on its own, it can form functional heterotetrameric channels with KCNB1 and KCNB2. Each regulatory subunit has unique regulatory properties that can lead to extensive inhibition, significant changes in kinetics, and/or substantial shifts in the voltage dependencies of the inactivation process. This Pongo abelii (Sumatran orangutan) protein is Delayed-rectifier potassium channel regulatory subunit KCNS1.